A 310-amino-acid chain; its full sequence is Zinc finger protein-like 1 (310 aa).

The B box-type; degenerate zinc-finger motif lies at 1–43 (MGLCKCPKRKVTNLFCFEHRVNVCEHCLVANHAKCIVQSYLQW). Topologically, residues 1 to 266 (MGLCKCPKRK…RPLTLLQRAG (266 aa)) are cytoplasmic. An RING-type; degenerate zinc finger spans residues 53-101 (CRLCNIPLASRETTRLVCYDLFHWACLNERAAQLPRNTAPAGYQCPSCN). Residues 145–231 (PEPLNTSDFS…RTPGLHGDCD (87 aa)) form a disordered region. A compositionally biased stretch (polar residues) spans 148-165 (LNTSDFSDWSSFNASSTP). Over residues 213–224 (KVYDTRDDDRTP) the composition is skewed to basic and acidic residues. Residues 267–287 (LLLLLGLLGFLALLALMSRLG) form a helical membrane-spanning segment. Over 288 to 310 (RAAADSDPNLDPLMNPHIRVGPS) the chain is Lumenal.

This sequence belongs to the ZFPL1 family. Interacts with GOLGA2/GM130. In terms of processing, phosphorylated. As to expression, expressed strongly in the exocrine pancreas.

The protein localises to the golgi apparatus. Its subcellular location is the cis-Golgi network membrane. Its function is as follows. Required for cis-Golgi integrity and efficient ER to Golgi transport. Involved in the maintenance of the integrity of the cis-Golgi, possibly via its interaction with GOLGA2/GM130. The sequence is that of Zinc finger protein-like 1 (ZFPL1) from Homo sapiens (Human).